Consider the following 328-residue polypeptide: Carbonic anhydrase-related protein 11 (328 aa).

Positions 1–23 (MGAAARLSAPRALVLWAALGAAA) are cleaved as a signal peptide. The Alpha-carbonic anhydrase domain maps to 33-303 (DWWSYKDNLQ…LAHRALRGNR (271 aa)). 3 N-linked (GlcNAc...) asparagine glycosylation sites follow: Asn118, Asn170, and Asn260. Residues 299–328 (LRGNRDPRHPERRCRGPNYRLHVDGVPHGR) are disordered. Residues 319–328 (LHVDGVPHGR) are compositionally biased toward basic and acidic residues.

This sequence belongs to the alpha-carbonic anhydrase family. In terms of tissue distribution, expressed abundantly in the brain with moderate expression also present in spinal cord and thyroid.

Its subcellular location is the secreted. In terms of biological role, does not have a catalytic activity. The polypeptide is Carbonic anhydrase-related protein 11 (CA11) (Homo sapiens (Human)).